The primary structure comprises 397 residues: Serpin B10 (397 aa).

The Nuclear localization signal signature appears at 74–77 (KKRK).

This sequence belongs to the serpin family. Ov-serpin subfamily.

It localises to the nucleus. It is found in the cytoplasm. Functionally, protease inhibitor that may play a role in the regulation of protease activities during hematopoiesis and apoptosis induced by TNF. May regulate protease activities in the cytoplasm and in the nucleus. This is Serpin B10 (Serpinb10) from Mus musculus (Mouse).